A 473-amino-acid polypeptide reads, in one-letter code: Photosystem II CP43 reaction center protein (473 aa).

Residues 1-14 (MKILYSLRRFYHVE) constitute a propeptide that is removed on maturation. T15 carries the post-translational modification N-acetylthreonine. Position 15 is a phosphothreonine (T15). The next 5 membrane-spanning stretches (helical) occupy residues 69 to 93 (LFEV…PHLA), 134 to 155 (LLGP…KDRN), 178 to 200 (KALY…RKIT), 255 to 275 (KPFA…LSYS), and 291 to 312 (WFNN…ASQA). [CaMn4O5] cluster is bound at residue E367. Residues 447–471 (RARAAAAGFEKGIDRDLEPVLFMTP) traverse the membrane as a helical segment.

The protein belongs to the PsbB/PsbC family. PsbC subfamily. PSII is composed of 1 copy each of membrane proteins PsbA, PsbB, PsbC, PsbD, PsbE, PsbF, PsbH, PsbI, PsbJ, PsbK, PsbL, PsbM, PsbT, PsbX, PsbY, PsbZ, Psb30/Ycf12, at least 3 peripheral proteins of the oxygen-evolving complex and a large number of cofactors. It forms dimeric complexes. The cofactor is Binds multiple chlorophylls and provides some of the ligands for the Ca-4Mn-5O cluster of the oxygen-evolving complex. It may also provide a ligand for a Cl- that is required for oxygen evolution. PSII binds additional chlorophylls, carotenoids and specific lipids..

It localises to the plastid. Its subcellular location is the chloroplast thylakoid membrane. In terms of biological role, one of the components of the core complex of photosystem II (PSII). It binds chlorophyll and helps catalyze the primary light-induced photochemical processes of PSII. PSII is a light-driven water:plastoquinone oxidoreductase, using light energy to abstract electrons from H(2)O, generating O(2) and a proton gradient subsequently used for ATP formation. The chain is Photosystem II CP43 reaction center protein from Lemna minor (Common duckweed).